We begin with the raw amino-acid sequence, 85 residues long: Large ribosomal subunit protein bL27 (85 aa).

Over residues 1–10 (MAQKKGGGST) the composition is skewed to gly residues. A disordered region spans residues 1–20 (MAQKKGGGSTRNGRDSQPKM).

Belongs to the bacterial ribosomal protein bL27 family.

This is Large ribosomal subunit protein bL27 from Methylibium petroleiphilum (strain ATCC BAA-1232 / LMG 22953 / PM1).